The sequence spans 284 residues: MERDFCEIKLDEPLKYHTSFKIGGPARLFVVPNSIEGLICALSHFPDAKILGRGTNILAPDSGVDVVISTVNLNKCFVDDELIVCESGASLFSVCKKASHNSLSGLEFAYGIPGSVGGAIYMNAGAYGGQICDVVAWVEVYDGEKVMTLDRSQLEFSYRKSIFQRTRWMILKAAFKLKKADMNEINNAMEEIMTRRMESQPMDMPSAGSVFKKPGEDFYVARVIEEIGLKGLRVGDAQISTKHAGFIVNLGEARSSDVLKLIEIIRHRVKEHCGIQLQLEVEIW.

The region spanning 21-180 is the FAD-binding PCMH-type domain; the sequence is KIGGPARLFV…LKAAFKLKKA (160 aa). Arg159 is an active-site residue. The Proton donor role is filled by Ser209. Glu280 is a catalytic residue.

This sequence belongs to the MurB family. FAD is required as a cofactor.

It is found in the cytoplasm. The catalysed reaction is UDP-N-acetyl-alpha-D-muramate + NADP(+) = UDP-N-acetyl-3-O-(1-carboxyvinyl)-alpha-D-glucosamine + NADPH + H(+). It participates in cell wall biogenesis; peptidoglycan biosynthesis. In terms of biological role, cell wall formation. This chain is UDP-N-acetylenolpyruvoylglucosamine reductase, found in Pseudothermotoga lettingae (strain ATCC BAA-301 / DSM 14385 / NBRC 107922 / TMO) (Thermotoga lettingae).